The sequence spans 103 residues: Large ribosomal subunit protein uL23 (103 aa).

This sequence belongs to the universal ribosomal protein uL23 family. As to quaternary structure, part of the 50S ribosomal subunit. Contacts protein L29, and trigger factor when it is bound to the ribosome.

Its function is as follows. One of the early assembly proteins it binds 23S rRNA. One of the proteins that surrounds the polypeptide exit tunnel on the outside of the ribosome. Forms the main docking site for trigger factor binding to the ribosome. The sequence is that of Large ribosomal subunit protein uL23 from Chlorobaculum tepidum (strain ATCC 49652 / DSM 12025 / NBRC 103806 / TLS) (Chlorobium tepidum).